The following is a 438-amino-acid chain: High-affinity gluconate transporter (438 aa).

Helical transmembrane passes span 2–22 (PLVI…RFKM), 23–43 (NGFI…GMPL), 52–72 (AGVG…AMLG), 108–128 (VGFA…VFTI), 134–154 (IPLL…HGFL), 174–194 (TLLY…PVYA), 222–242 (FGVS…RAIA), 258–278 (FLGD…FTFG), 292–312 (LVSS…GGAF), 327–347 (SMMH…AAVL), 349–369 (IALG…APLI), 370–390 (ATTG…SVIF), and 418–438 (MLET…NMVI).

The protein belongs to the GntP permease family.

The protein localises to the cell inner membrane. It participates in carbohydrate acid metabolism; D-gluconate degradation. In terms of biological role, part of the gluconate utilization system Gnt-I; high-affinity intake of gluconate. The polypeptide is High-affinity gluconate transporter (gntT) (Escherichia coli (strain K12)).